The sequence spans 214 residues: Thiamine pyrophosphokinase (214 aa).

It belongs to the thiamine pyrophosphokinase family.

It carries out the reaction thiamine + ATP = thiamine diphosphate + AMP + H(+). It functions in the pathway cofactor biosynthesis; thiamine diphosphate biosynthesis; thiamine diphosphate from thiamine: step 1/1. In terms of biological role, catalyzes the ATP-dependent phosphorylation of thiamine to thiamine pyrophosphate. Is involved in thiamine salvage. The protein is Thiamine pyrophosphokinase of Bacillus subtilis (strain 168).